We begin with the raw amino-acid sequence, 148 residues long: UPF0756 membrane protein YeaL (148 aa).

A run of 4 helical transmembrane segments spans residues 14-34 (ALGFISHNTTVAVSILVLIIV), 51-71 (LTVGIIILTIGVMAPIASGTL), 86-106 (LVAIAVGVFVSWLGGRGVALM), and 121-141 (VLGVALFRGVPVGPLIAAGLV).

Belongs to the UPF0756 family.

The protein resides in the cell membrane. This is UPF0756 membrane protein YeaL from Salmonella arizonae (strain ATCC BAA-731 / CDC346-86 / RSK2980).